An 82-amino-acid polypeptide reads, in one-letter code: ATP synthase subunit c (82 aa).

2 helical membrane passes run P3 to G23 and L57 to A77.

As to quaternary structure, F-type ATPases have 2 components, F(1) - the catalytic core - and F(0) - the membrane proton channel. F(1) has five subunits: alpha(3), beta(3), gamma(1), delta(1), epsilon(1). F(0) has four main subunits: a(1), b(1), b'(1) and c(10-14). The alpha and beta chains form an alternating ring which encloses part of the gamma chain. F(1) is attached to F(0) by a central stalk formed by the gamma and epsilon chains, while a peripheral stalk is formed by the delta, b and b' chains.

The protein localises to the cellular thylakoid membrane. With respect to regulation, inhibited by dicyclohexylcarbodiimide. In terms of biological role, f(1)F(0) ATP synthase produces ATP from ADP in the presence of a proton or sodium gradient. F-type ATPases consist of two structural domains, F(1) containing the extramembraneous catalytic core and F(0) containing the membrane proton channel, linked together by a central stalk and a peripheral stalk. During catalysis, ATP synthesis in the catalytic domain of F(1) is coupled via a rotary mechanism of the central stalk subunits to proton translocation. Key component of the F(0) channel; it plays a direct role in translocation across the membrane. A homomeric c-ring of between 10-14 subunits forms the central stalk rotor element with the F(1) delta and epsilon subunits. Functionally, the complex from the organism is particularly stable to disruption and remains functional after 6 hrs at 55 degrees Celsius. The sequence is that of ATP synthase subunit c (atpE) from Thermosynechococcus vestitus (strain NIES-2133 / IAM M-273 / BP-1).